Here is a 318-residue protein sequence, read N- to C-terminus: tRNA uridine(34) hydroxylase (318 aa).

The Rhodanese domain maps to 123–217; it reads EDDDTVIIDA…YGKDPETKGE (95 aa). Residue C177 is the Cysteine persulfide intermediate of the active site.

Belongs to the TrhO family.

The enzyme catalyses uridine(34) in tRNA + AH2 + O2 = 5-hydroxyuridine(34) in tRNA + A + H2O. In terms of biological role, catalyzes oxygen-dependent 5-hydroxyuridine (ho5U) modification at position 34 in tRNAs. In Staphylococcus aureus (strain MSSA476), this protein is tRNA uridine(34) hydroxylase.